A 432-amino-acid chain; its full sequence is Ectonucleoside triphosphate diphosphohydrolase 5 (432 aa).

The first 24 residues, 1-24 (MALYQGAAFFMLVASCVCSTVFHR), serve as a signal peptide directing secretion. Catalysis depends on Glu-175, which acts as the Proton acceptor. Asn-235 carries an N-linked (GlcNAc...) asparagine glycan. 2 disulfide bridges follow: Cys-275–Cys-307 and Cys-367–Cys-381. Asn-372 is a glycosylation site (N-linked (GlcNAc...) asparagine).

It belongs to the GDA1/CD39 NTPase family. As to quaternary structure, monomer; active form. Homodimer; disulfide-linked. Homodimers are enzymatically inactive. Ca(2+) is required as a cofactor. Requires Mg(2+) as cofactor. Post-translationally, N-glycosylated; high-mannose type.

It localises to the endoplasmic reticulum. The protein localises to the secreted. It catalyses the reaction a ribonucleoside 5'-diphosphate + H2O = a ribonucleoside 5'-phosphate + phosphate + H(+). The enzyme catalyses GDP + H2O = GMP + phosphate + H(+). It carries out the reaction UDP + H2O = UMP + phosphate + H(+). The catalysed reaction is IDP + H2O = IMP + phosphate + H(+). It catalyses the reaction CDP + H2O = CMP + phosphate + H(+). The enzyme catalyses ADP + H2O = AMP + phosphate + H(+). It functions in the pathway protein modification; protein glycosylation. In terms of biological role, hydrolyzes nucleoside diphosphates with a preference for GDP, IDP and UDP compared to ADP and CDP. In the lumen of the endoplasmic reticulum, hydrolyzes UDP that acts as an end-product feedback inhibitor of the UDP-Glc:glycoprotein glucosyltransferases. UMP can be transported back by an UDP-sugar antiporter to the cytosol where it is consumed to regenerate UDP-glucose. Therefore, it positively regulates protein reglucosylation by clearing UDP from the ER lumen and by promoting the regeneration of UDP-glucose. Protein reglucosylation is essential to proper glycoprotein folding and quality control in the ER. The polypeptide is Ectonucleoside triphosphate diphosphohydrolase 5 (ENTPD5) (Bos taurus (Bovine)).